The sequence spans 306 residues: Small ribosomal subunit protein uS2 (306 aa).

Positions 229-238 (GEESAAEERP) are enriched in basic and acidic residues. The tract at residues 229–306 (GEESAAEERP…VGEGDESEER (78 aa)) is disordered. Positions 261 to 287 (QPGEPEAEAFEEAAGEPEDSTEEEAAE) are enriched in acidic residues.

The protein belongs to the universal ribosomal protein uS2 family.

In Rubrobacter xylanophilus (strain DSM 9941 / JCM 11954 / NBRC 16129 / PRD-1), this protein is Small ribosomal subunit protein uS2.